Consider the following 428-residue polypeptide: Sarcosine reductase complex component B subunit alpha (428 aa).

At Cys242 the chain carries Pyruvic acid (Cys).

In terms of assembly, heterotetramer of two alpha and two beta subunits. Component of the sarcosine reductase complex, together with components A and C. PB is substrate specific. Post-translationally, the peptide chain is cleaved into beta and alpha chains, and the alpha chain N-terminal cysteine is deaminated and oxidized to form a reactive pyruvoyl group.

The enzyme catalyses acetyl phosphate + methylamine + [thioredoxin]-disulfide + H2O = sarcosine + [thioredoxin]-dithiol + phosphate + H(+). Functionally, in the first step of sarcosine reductase, the substrate is bound to component PB via a Schiff base intermediate. Then the PB-activated substrate is nucleophilically attacked by the selenol anion of component PA to transform it to a carboxymethylated selenoether and the respective amine. By action of component PC, acetyl phosphate is formed, leaving component PA in its oxidized state. Finally component PA becomes reduced by the thioredoxin system to start a new catalytic cycle of reductive deamination. In Peptoclostridium acidaminophilum (Eubacterium acidaminophilum), this protein is Sarcosine reductase complex component B subunit alpha (grdG).